Consider the following 360-residue polypeptide: Chorismate synthase (360 aa).

The interval 36–60 (LSEDDIQPDLDRRKPGTSKYTTPRR) is disordered. R48 is a binding site for NADP(+). Residues 125–127 (RSS), 246–247 (NA), G286, 301–305 (KPTSS), and R327 contribute to the FMN site.

Belongs to the chorismate synthase family. In terms of assembly, homotetramer. Requires FMNH2 as cofactor.

The enzyme catalyses 5-O-(1-carboxyvinyl)-3-phosphoshikimate = chorismate + phosphate. The protein operates within metabolic intermediate biosynthesis; chorismate biosynthesis; chorismate from D-erythrose 4-phosphate and phosphoenolpyruvate: step 7/7. Catalyzes the anti-1,4-elimination of the C-3 phosphate and the C-6 proR hydrogen from 5-enolpyruvylshikimate-3-phosphate (EPSP) to yield chorismate, which is the branch point compound that serves as the starting substrate for the three terminal pathways of aromatic amino acid biosynthesis. This reaction introduces a second double bond into the aromatic ring system. This is Chorismate synthase from Histophilus somni (strain 129Pt) (Haemophilus somnus).